We begin with the raw amino-acid sequence, 134 residues long: Phosphoribosyl-AMP cyclohydrolase (134 aa).

Asp90 serves as a coordination point for Mg(2+). Cys91 contributes to the Zn(2+) binding site. 2 residues coordinate Mg(2+): Asp92 and Asp94. The Zn(2+) site is built by Cys107 and Cys114.

Belongs to the PRA-CH family. Homodimer. It depends on Mg(2+) as a cofactor. The cofactor is Zn(2+).

It localises to the cytoplasm. It carries out the reaction 1-(5-phospho-beta-D-ribosyl)-5'-AMP + H2O = 1-(5-phospho-beta-D-ribosyl)-5-[(5-phospho-beta-D-ribosylamino)methylideneamino]imidazole-4-carboxamide. It participates in amino-acid biosynthesis; L-histidine biosynthesis; L-histidine from 5-phospho-alpha-D-ribose 1-diphosphate: step 3/9. Functionally, catalyzes the hydrolysis of the adenine ring of phosphoribosyl-AMP. The sequence is that of Phosphoribosyl-AMP cyclohydrolase from Arthrobacter sp. (strain FB24).